A 207-amino-acid chain; its full sequence is Putative acetyltransferase C18B11.09c (207 aa).

This sequence belongs to the transferase hexapeptide repeat family.

The sequence is that of Putative acetyltransferase C18B11.09c from Schizosaccharomyces pombe (strain 972 / ATCC 24843) (Fission yeast).